Here is a 230-residue protein sequence, read N- to C-terminus: Heptaprenylglyceryl phosphate synthase (230 aa).

Lysine 12 serves as a coordination point for sn-glycerol 1-phosphate. The Mg(2+) site is built by aspartate 14 and threonine 40. Sn-glycerol 1-phosphate-binding positions include 159 to 164 (YIEYSG), glycine 189, and 209 to 210 (GD).

It belongs to the GGGP/HepGP synthase family. Group I subfamily. In terms of assembly, homodimer. The cofactor is Mg(2+).

The catalysed reaction is sn-glycerol 1-phosphate + all-trans-heptaprenyl diphosphate = 3-heptaprenyl-sn-glycero-1-phosphate + diphosphate. It functions in the pathway membrane lipid metabolism; glycerophospholipid metabolism. In terms of biological role, prenyltransferase that catalyzes in vivo the transfer of the heptaprenyl moiety of heptaprenyl pyrophosphate (HepPP; 35 carbon atoms) to the C3 hydroxyl of sn-glycerol-1-phosphate (G1P), producing heptaprenylglyceryl phosphate (HepGP). This reaction is an ether-bond-formation step in the biosynthesis of archaea-type G1P-based membrane lipids found in Bacillales. The protein is Heptaprenylglyceryl phosphate synthase of Staphylococcus aureus (strain USA300).